A 173-amino-acid chain; its full sequence is MVRLKSRYILFEIIFPPTDTNVEESVSKADILLSHHRASPADVSIKSILQEIRRSLSLNLGDYGSAKCNSLLQLKYFSNKTSTGIIRCHREDCDLVIMALMLMSKIGDVDGLIVNPVKVSGTIKKIEQFAMRRNSKILNIIKCSQSSHLSDNDFIINDFKKIGRENENENEDD.

Belongs to the eukaryotic/archaeal RNase P protein component 2 family. In terms of assembly, component of nuclear RNase P and RNase MRP complexes. RNase P consists of an RNA moiety and at least 9 protein subunits including POP1, POP3, POP4, POP5, POP6, POP7, POP8, RPP1 and RPR2. RNase MRP complex consists of an RNA moiety and at least 10 protein subunits including POP1, POP3, POP4, POP5, POP6, POP7, POP8, RMP1, RPP1 and SNM1, many of which are shared with the RNase P complex.

The protein resides in the cytoplasm. Its subcellular location is the nucleus. It catalyses the reaction Endonucleolytic cleavage of RNA, removing 5'-extranucleotides from tRNA precursor.. In terms of biological role, component of ribonuclease P, a protein complex that generates mature tRNA molecules by cleaving their 5'-ends. Also a component of RNase MRP, which cleaves pre-rRNA sequences. The protein is Ribonuclease P/MRP protein subunit POP5 (POP5) of Saccharomyces cerevisiae (strain ATCC 204508 / S288c) (Baker's yeast).